The chain runs to 795 residues: Protocadherin beta-12 (795 aa).

The N-terminal stretch at 1–26 is a signal peptide; the sequence is MENGGAGTLQIRQVLLFFVLLGMSQA. The Extracellular segment spans residues 27 to 690; sequence GSETGNFLVM…AQADSLTVYL (664 aa). Cadherin domains are found at residues 35 to 133, 138 to 242, 247 to 347, 352 to 451, and 456 to 561; these read VMEE…SPVF, MLLE…SPEF, YEVK…APEI, ITSP…APAF, and YALF…SPFV. N-linked (GlcNAc...) asparagine glycans are attached at residues asparagine 418, asparagine 436, asparagine 487, and asparagine 567. In terms of domain architecture, Cadherin 6 spans 568-671; the sequence is GSAPCTELVP…LVDGFSQPYL (104 aa). Residues 691–711 form a helical membrane-spanning segment; sequence VVALASVSSLFLFSVLLFVAV. The Cytoplasmic segment spans residues 712–795; that stretch reads RLCRRSRAAP…NPPFQNNLGF (84 aa).

It localises to the cell membrane. Its function is as follows. Potential calcium-dependent cell-adhesion protein. May be involved in the establishment and maintenance of specific neuronal connections in the brain. This chain is Protocadherin beta-12 (PCDHB12), found in Homo sapiens (Human).